Consider the following 394-residue polypeptide: Flap endonuclease 1 (394 aa).

Residues 1–104 (MGIKQLFTII…GELARRYQRK (104 aa)) are N-domain. Asp-34 is a Mg(2+) binding site. The DNA site is built by Arg-47 and Arg-70. Positions 86, 158, 160, 179, and 181 each coordinate Mg(2+). Positions 122-253 (DVEKFSRRTV…STALKLIREH (132 aa)) are I-domain. Position 158 (Glu-158) interacts with DNA. The DNA site is built by Gly-231 and Asp-233. Mg(2+) is bound at residue Asp-233. Residues 340-348 (QQQRLEGFF) are interaction with PCNA. Residues 358-394 (QKAHKRKLEVKAEEAKKKLKAEKKEKAKAKARPRGTA) form a disordered region. Residues 374–394 (KKLKAEKKEKAKAKARPRGTA) are compositionally biased toward basic residues.

This sequence belongs to the XPG/RAD2 endonuclease family. FEN1 subfamily. As to quaternary structure, interacts with PCNA. Three molecules of FEN1 bind to one PCNA trimer with each molecule binding to one PCNA monomer. PCNA stimulates the nuclease activity without altering cleavage specificity. It depends on Mg(2+) as a cofactor. In terms of processing, phosphorylated. Phosphorylation upon DNA damage induces relocalization to the nuclear plasma.

The protein resides in the nucleus. Its subcellular location is the nucleolus. It is found in the nucleoplasm. It localises to the mitochondrion. In terms of biological role, structure-specific nuclease with 5'-flap endonuclease and 5'-3' exonuclease activities involved in DNA replication and repair. During DNA replication, cleaves the 5'-overhanging flap structure that is generated by displacement synthesis when DNA polymerase encounters the 5'-end of a downstream Okazaki fragment. It enters the flap from the 5'-end and then tracks to cleave the flap base, leaving a nick for ligation. Also involved in the long patch base excision repair (LP-BER) pathway, by cleaving within the apurinic/apyrimidinic (AP) site-terminated flap. Acts as a genome stabilization factor that prevents flaps from equilibrating into structures that lead to duplications and deletions. Also possesses 5'-3' exonuclease activity on nicked or gapped double-stranded DNA, and exhibits RNase H activity. Also involved in replication and repair of rDNA and in repairing mitochondrial DNA. The polypeptide is Flap endonuclease 1 (Pyricularia oryzae (strain 70-15 / ATCC MYA-4617 / FGSC 8958) (Rice blast fungus)).